A 638-amino-acid polypeptide reads, in one-letter code: MSALAGEDVWRCPGCGDHIAPSQIWYRTVNETWHGSCFRCSECQDSLTNWYYEKDGKLYCPKDYWGKFGEFCHGCSLLMTGPFMVAGEFKYHPECFACMSCKVIIEDGDAYALVQHATLYCGKCHNEVVLAPMFERLSTESVQEQLPYSVTLISMPATTEGRRGFSVSVESACSNYATTVQVKEVNRMHISPNNRNAIHPGDRILEINGTPVRTLRVEEVEDAISQTSQTLQLLIEHDPVSQRLDQLRLEARLAPHMQNAGHPHALSTLDTKENLEGTLRRRSLRRSNSISKSPGPSSPKEPLLFSRDISRSESLRCSSSYSQQIFRPCDLIHGEVLGKGFFGQAIKVTHKATGKVMVMKELIRCDEETQKTFLTEVKVMRSLDHPNVLKFIGVLYKDKKLNLLTEYIEGGTLKDFLRSMDPFPWQQKVRFAKGIASGMAYLHSMCIIHRDLNSHNCLIKLDKTVVVADFGLSRLIVEERKRAPMEKATTKKRTLRKNDRKKRYTVVGNPYWMAPEMLNGKSYDETVDIFSFGIVLCEIIGQVYADPDCLPRTLDFGLNVKLFWEKFVPTDCPPAFFPLAAICCRLEPESRPAFSKLEDSFEALSLYLGELGIPLPAELEELDHTVSMQYGLTRDSPP.

2 consecutive LIM zinc-binding domains span residues 12–63 (CPGC…CPKD) and 72–124 (CHGC…CGKC). A PDZ domain is found at 152 to 239 (LISMPATTEG…TLQLLIEHDP (88 aa)). Thr210 bears the Phosphothreonine mark. Residues 279–304 (LRRRSLRRSNSISKSPGPSSPKEPLL) form a disordered region. Residues 286–302 (RSNSISKSPGPSSPKEP) are compositionally biased toward low complexity. Phosphoserine occurs at positions 293 and 298. One can recognise a Protein kinase domain in the interval 331–608 (LIHGEVLGKG…DSFEALSLYL (278 aa)). Residues 337-345 (LGKGFFGQA) and Lys360 each bind ATP. Residue Asp451 is part of the active site. The residue at position 505 (Thr505) is a Phosphothreonine; by ROCK1 and CDC42BP.

The protein belongs to the protein kinase superfamily. TKL Ser/Thr protein kinase family. As to quaternary structure, interacts with LIMK2b. In terms of assembly, interacts with LIMK2a. Binds ROCK1 and MARF1. Interacts with NISCH. Post-translationally, phosphorylated on serine and/or threonine residues by ROCK1.

The protein localises to the cytoplasm. Its subcellular location is the cytoskeleton. The protein resides in the spindle. It is found in the microtubule organizing center. It localises to the centrosome. The protein localises to the nucleus. Its subcellular location is the perinuclear region. It catalyses the reaction L-seryl-[protein] + ATP = O-phospho-L-seryl-[protein] + ADP + H(+). The enzyme catalyses L-threonyl-[protein] + ATP = O-phospho-L-threonyl-[protein] + ADP + H(+). Its function is as follows. Serine/threonine-protein kinase that plays an essential role in the regulation of actin filament dynamics. Acts downstream of several Rho family GTPase signal transduction pathways. Involved in astral microtubule organization and mitotic spindle orientation during early stages of mitosis by mediating phosphorylation of TPPP. Displays serine/threonine-specific phosphorylation of myelin basic protein and histone (MBP) in vitro. Suppresses ciliogenesis via multiple pathways; phosphorylation of CFL1, suppression of directional trafficking of ciliary vesicles to the ciliary base, and by facilitating YAP1 nuclear localization where it acts as a transcriptional corepressor of the TEAD4 target genes AURKA and PLK1. This chain is LIM domain kinase 2 (LIMK2), found in Homo sapiens (Human).